We begin with the raw amino-acid sequence, 257 residues long: UPF0246 protein BT_3869 (257 aa).

It belongs to the UPF0246 family.

The chain is UPF0246 protein BT_3869 from Bacteroides thetaiotaomicron (strain ATCC 29148 / DSM 2079 / JCM 5827 / CCUG 10774 / NCTC 10582 / VPI-5482 / E50).